Reading from the N-terminus, the 164-residue chain is UPF0303 protein R02983 (164 aa).

Belongs to the UPF0303 family.

In Rhizobium meliloti (strain 1021) (Ensifer meliloti), this protein is UPF0303 protein R02983.